The primary structure comprises 1234 residues: ATP-dependent helicase/nuclease subunit A (1234 aa).

The UvrD-like helicase ATP-binding domain occupies 2-475 (TQFTTSQQAA…IILAENFRST (474 aa)). Residue 23–30 (ASAGSGKT) participates in ATP binding. The region spanning 507-806 (YGALDYGDAH…KLMTIHKSKG (300 aa)) is the UvrD-like helicase C-terminal domain.

It belongs to the helicase family. AddA subfamily. In terms of assembly, heterodimer of AddA and AddB/RexB. Requires Mg(2+) as cofactor.

It carries out the reaction Couples ATP hydrolysis with the unwinding of duplex DNA by translocating in the 3'-5' direction.. The catalysed reaction is ATP + H2O = ADP + phosphate + H(+). The heterodimer acts as both an ATP-dependent DNA helicase and an ATP-dependent, dual-direction single-stranded exonuclease. Recognizes the chi site generating a DNA molecule suitable for the initiation of homologous recombination. The AddA nuclease domain is required for chi fragment generation; this subunit has the helicase and 3' -&gt; 5' nuclease activities. The chain is ATP-dependent helicase/nuclease subunit A from Lacticaseibacillus casei (strain BL23) (Lactobacillus casei).